The following is a 743-amino-acid chain: Dynein regulatory complex protein 1 homolog (743 aa).

Composition is skewed to acidic residues over residues 1–10 (MDDNEDELEE) and 19–28 (SVEEEEEVEP). Residues 1 to 34 (MDDNEDELEEHQELVSDGSVEEEEEVEPDLGPVD) form a disordered region. 2 coiled-coil regions span residues 175 to 332 (DQIE…VLMN) and 395 to 416 (KLHS…NNRE). The interval 599-620 (NRLQGAAGGQPDEKEHRSTGDT) is disordered. Residues 715-742 (KMRVQYDAEVVFLRRQNEELRHLLQKFT) adopt a coiled-coil conformation.

This sequence belongs to the DRC1 family.

In Drosophila melanogaster (Fruit fly), this protein is Dynein regulatory complex protein 1 homolog.